Consider the following 209-residue polypeptide: Thymidine kinase (209 aa).

ATP-binding positions include 9–16 and 88–91; these read AAMNAGKS and DEAQ. E89 acts as the Proton acceptor in catalysis. 4 residues coordinate Zn(2+): C146, C148, C183, and H186.

This sequence belongs to the thymidine kinase family. Homotetramer.

It localises to the cytoplasm. The catalysed reaction is thymidine + ATP = dTMP + ADP + H(+). In Legionella pneumophila subsp. pneumophila (strain Philadelphia 1 / ATCC 33152 / DSM 7513), this protein is Thymidine kinase.